The chain runs to 895 residues: Tiger protein D1 (895 aa).

An N-terminal signal peptide occupies residues 1–21 (MIHKMYFFLILLFSLFIIVYS). Residues 22–861 (APNRVTRNET…ERKSSKLSGG (840 aa)) lie on the Extracellular side of the membrane. N-linked (GlcNAc...) asparagine glycosylation is found at Asn29, Asn52, Asn171, Asn181, Asn253, Asn257, Asn277, Asn288, Asn351, Asn368, Asn407, Asn428, Asn451, Asn481, Asn507, Asn521, Asn573, Asn583, Asn593, Asn623, Asn652, Asn685, Asn720, Asn757, Asn766, Asn780, and Asn799. One can recognise an IPT/TIG 1 domain in the interval 295–381 (AVISSISSVS…SGSDAVTFTY (87 aa)). IPT/TIG domains are found at residues 560–638 (PKVE…SFYL) and 642–725 (PVIY…TLTY). A helical transmembrane segment spans residues 862-882 (AIAGITIGCVAGAGALVGSVF). Over 883 to 895 (YFKLITRVKKAFN) the chain is Cytoplasmic.

It is found in the cell membrane. Its function is as follows. May be involved in the regulation of aggregation. Activates tgrC1. The chain is Tiger protein D1 (tgrD1) from Dictyostelium discoideum (Social amoeba).